The chain runs to 450 residues: UDP-N-acetylmuramoylalanine--D-glutamate ligase (450 aa).

115–121 is an ATP binding site; the sequence is GTNGKTT.

Belongs to the MurCDEF family.

Its subcellular location is the cytoplasm. It carries out the reaction UDP-N-acetyl-alpha-D-muramoyl-L-alanine + D-glutamate + ATP = UDP-N-acetyl-alpha-D-muramoyl-L-alanyl-D-glutamate + ADP + phosphate + H(+). The protein operates within cell wall biogenesis; peptidoglycan biosynthesis. Its function is as follows. Cell wall formation. Catalyzes the addition of glutamate to the nucleotide precursor UDP-N-acetylmuramoyl-L-alanine (UMA). This chain is UDP-N-acetylmuramoylalanine--D-glutamate ligase, found in Caldanaerobacter subterraneus subsp. tengcongensis (strain DSM 15242 / JCM 11007 / NBRC 100824 / MB4) (Thermoanaerobacter tengcongensis).